The primary structure comprises 155 residues: MSKETKLQVEAIKNGTVIDHIPAKVGIKVLKLFDMHNSAQRVTIGLNLPSSALGSKDLLKIENVFISEAQANKLALYAPHATVNQIENYEVVKKLALQLPERINNVFACPNSNCISHNEPVESSFKLSEKNNDIRLKCKYCEKVFARDVVTEIEA.

4 residues coordinate Zn(2+): Cys109, Cys114, Cys138, and Cys141.

It belongs to the PyrI family. Contains catalytic and regulatory chains. The cofactor is Zn(2+).

In terms of biological role, involved in allosteric regulation of aspartate carbamoyltransferase. The protein is Aspartate carbamoyltransferase regulatory chain of Vibrio cholerae serotype O1 (strain ATCC 39315 / El Tor Inaba N16961).